A 980-amino-acid polypeptide reads, in one-letter code: Zinc finger BED domain-containing protein 6 (980 aa).

Residues 1–89 are required for nucleolar localization; sequence MSVCTLSVPV…ILAKKFSKDL (89 aa). A disordered region spans residues 89 to 109; it reads LGSGRPVADAPASLASGAPEQ. The BED-type 1 zinc finger occupies 130 to 187; the sequence is AKTSIVWHFFHVDPQYTWRAICNLCEKSVSRGKPGSHLGTSTLQRHLQARHSPHWTRA. Residues Cys-151, Cys-154, His-175, and His-180 each coordinate Zn(2+). A disordered region spans residues 201-239; it reads LDLSLSPPSPGSNGSFEYIPTDSVDENRMGKKRDKSASD. A compositionally biased stretch (low complexity) spans 203–215; it reads LSLSPPSPGSNGS. Residues 265 to 322 form a BED-type 2 zinc finger; sequence AKTSAVWNFFYTDPQHISRAVCNICKRSVSRGRPGSHLGTSTLQRHLQATHPIHWAVA. 4 residues coordinate Zn(2+): Cys-286, Cys-289, His-310, and His-315. The segment at 328–397 is disordered; it reads AIGNGLDETE…ADQDNPVHAQ (70 aa). A compositionally biased stretch (acidic residues) spans 360-373; the sequence is TAEDLSDSDTDEPP. The residue at position 383 (Ser-383) is a Phosphoserine. The tract at residues 868-950 is HATC (Hobo-Ac-Tam3) domain; that stretch reads VVDEYFKEKY…EQLIFLKMNL (83 aa).

As to expression, expressed in pancreatic islet cells and weakly expressed in surrounding exocrine tissues (at protein level). Expressed in muscle and brain (at protein level). Shows broad tissue distribution with expression detected in brain, stomach, intestine, heart, kidney, liver, lung, skeletal muscle, ovary, spleen, tail and testis.

The protein localises to the nucleus. It is found in the nucleolus. It localises to the cytoplasm. Functionally, transcriptional repressor which binds to the consensus sequence 5'-GCTCGC-3', transcription regulation may be tissue-specific. Regulates the expression of target genes such as: IGF2, PGAP6/TMEM8, ENHO, and PIANP. Acts as a transcriptional repressor of growth factor IGF2, thereby negatively regulating postnatal growth of muscles and internal organs, especially in females. Negatively regulates myoblast differentiation and myoblast mitochondrial activity via its regulation of IGF2 transcription. Negatively regulates the cell cycle of myoblasts, potentially via transcriptional regulation of the E2F family of transcription factors such as: E2F1 and E2F2. Positively regulates the cell cycle and survival of pancreatic beta cells. Binds to the CDH2 gene and may directly repress CDH2 transcription. Probably by controlling CDH2 expression, regulates pancreatic beta cell adhesion, and formation of cell-to-cell junctions between pancreatic beta cells and neural crest stem cells. May also play a role in embryonic beta cell differentiation. May play a role in insulin sensitivity and glucose clearance. In Mus musculus (Mouse), this protein is Zinc finger BED domain-containing protein 6.